The primary structure comprises 269 residues: 3-methyl-2-oxobutanoate hydroxymethyltransferase (269 aa).

Mg(2+) contacts are provided by aspartate 50 and aspartate 89. 3-methyl-2-oxobutanoate is bound by residues 50 to 51 (DS), aspartate 89, and lysine 118. Glutamate 120 is a binding site for Mg(2+). Glutamate 187 acts as the Proton acceptor in catalysis.

The protein belongs to the PanB family. In terms of assembly, homodecamer; pentamer of dimers. Mg(2+) serves as cofactor.

Its subcellular location is the cytoplasm. The catalysed reaction is 3-methyl-2-oxobutanoate + (6R)-5,10-methylene-5,6,7,8-tetrahydrofolate + H2O = 2-dehydropantoate + (6S)-5,6,7,8-tetrahydrofolate. It participates in cofactor biosynthesis; (R)-pantothenate biosynthesis; (R)-pantoate from 3-methyl-2-oxobutanoate: step 1/2. Functionally, catalyzes the reversible reaction in which hydroxymethyl group from 5,10-methylenetetrahydrofolate is transferred onto alpha-ketoisovalerate to form ketopantoate. In Nitrosomonas europaea (strain ATCC 19718 / CIP 103999 / KCTC 2705 / NBRC 14298), this protein is 3-methyl-2-oxobutanoate hydroxymethyltransferase.